The primary structure comprises 1071 residues: V-type proton ATPase catalytic subunit A (1071 aa).

N-acetylalanine is present on Ala-2. Residue Thr-131 is modified to Phosphothreonine. Position 257-264 (257-264 (GAFGCGKT)) interacts with ATP. Residues 494–642 (LLGLWIGDGL…LVSLARSLGL (149 aa)) form the DOD-type homing endonuclease domain. Phosphoserine is present on residues Ser-858 and Ser-928.

This sequence belongs to the ATPase alpha/beta chains family. In terms of assembly, V-ATPase is a heteromultimeric enzyme composed of a peripheral catalytic V1 complex (components A to H) attached to an integral membrane V0 proton pore complex (components: a, c, c', c'', d, e, f and VOA1). Interacts with RAV1 and RAV2 components of the RAVE complex, which are essential for the stability and assembly of V-ATPase. Post-translationally, this protein undergoes a protein self splicing that involves a post-translational excision of the VDE intervening region (intein) followed by peptide ligation.

The protein localises to the vacuole membrane. The catalysed reaction is ATP + H2O + 4 H(+)(in) = ADP + phosphate + 5 H(+)(out). Catalytic subunit of the V1 complex of vacuolar(H+)-ATPase (V-ATPase), a multisubunit enzyme composed of a peripheral complex (V1) that hydrolyzes ATP and a membrane integral complex (V0) that translocates protons. V-ATPase is responsible for acidifying and maintaining the pH of intracellular compartments. Functionally, PI-SceI is an endonuclease that can cleave at a site present in a VMA1 allele that lacks the derived endonuclease segment of the open reading frame; cleavage at this site only occurs during meiosis and initiates 'homing', a genetic event that converts a VMA1 allele lacking VDE into one that contains it. This Saccharomyces cerevisiae (strain ATCC 204508 / S288c) (Baker's yeast) protein is V-type proton ATPase catalytic subunit A.